The following is a 262-amino-acid chain: Acyl-[acyl-carrier-protein]--UDP-N-acetylglucosamine O-acyltransferase (262 aa).

This sequence belongs to the transferase hexapeptide repeat family. LpxA subfamily. Homotrimer.

Its subcellular location is the cytoplasm. The catalysed reaction is a (3R)-hydroxyacyl-[ACP] + UDP-N-acetyl-alpha-D-glucosamine = a UDP-3-O-[(3R)-3-hydroxyacyl]-N-acetyl-alpha-D-glucosamine + holo-[ACP]. It functions in the pathway glycolipid biosynthesis; lipid IV(A) biosynthesis; lipid IV(A) from (3R)-3-hydroxytetradecanoyl-[acyl-carrier-protein] and UDP-N-acetyl-alpha-D-glucosamine: step 1/6. Its function is as follows. Involved in the biosynthesis of lipid A, a phosphorylated glycolipid that anchors the lipopolysaccharide to the outer membrane of the cell. The protein is Acyl-[acyl-carrier-protein]--UDP-N-acetylglucosamine O-acyltransferase of Paracidovorax citrulli (strain AAC00-1) (Acidovorax citrulli).